Consider the following 290-residue polypeptide: Zinc finger AN1 and C2H2 domain-containing stress-associated protein 16 (290 aa).

AN1-type zinc fingers lie at residues 7 to 55 (PNLG…QKDV) and 95 to 145 (VTKK…KPES). Cys13, Cys18, Cys28, Cys31, Cys36, His39, His45, Cys47, Cys101, Cys106, Cys118, Cys121, Cys126, His129, His135, and Cys137 together coordinate Zn(2+). C2H2-type zinc fingers lie at residues 224 to 247 (EQCV…EKSH) and 261 to 284 (DVCP…ERDH).

In terms of biological role, may be involved in environmental stress response. The polypeptide is Zinc finger AN1 and C2H2 domain-containing stress-associated protein 16 (SAP16) (Oryza sativa subsp. japonica (Rice)).